The following is a 339-amino-acid chain: MSASGLPFDDFRELIRNLPGPDLGAERAVREREATLTKPAGSLGRMEDIVAWLAAWTGKRTPQINRPLVAVFAGNHGVTAKNITPFPPSVTAQMVENFAAGGAAINQICIANDLGLKVFDLALEHPTGDITEEPAMDERTCAATMAFGMEAIAGGTDLLCIGEMGIGNTTIAAAIALALFGGTAEDWVGPGTGSTGELLQRKLAAVRQAVALHQAHLQDPLEVLSRLGGREIAAMAGAILAARMEKIPVIVDGFVASAAAAVLYAANPEAIDHCLFGHVSAEPGHRKLLEKMGKQPLLDMGMRLGEGTGAALAASIVKAAALCHSGMATFEQAGISGSK.

E306 (proton acceptor) is an active-site residue.

This sequence belongs to the CobT family.

It carries out the reaction 5,6-dimethylbenzimidazole + nicotinate beta-D-ribonucleotide = alpha-ribazole 5'-phosphate + nicotinate + H(+). The protein operates within nucleoside biosynthesis; alpha-ribazole biosynthesis; alpha-ribazole from 5,6-dimethylbenzimidazole: step 1/2. In terms of biological role, catalyzes the synthesis of alpha-ribazole-5'-phosphate from nicotinate mononucleotide (NAMN) and 5,6-dimethylbenzimidazole (DMB). The polypeptide is Nicotinate-nucleotide--dimethylbenzimidazole phosphoribosyltransferase (Brucella anthropi (strain ATCC 49188 / DSM 6882 / CCUG 24695 / JCM 21032 / LMG 3331 / NBRC 15819 / NCTC 12168 / Alc 37) (Ochrobactrum anthropi)).